Consider the following 405-residue polypeptide: Arginine biosynthesis bifunctional protein ArgJ (405 aa).

Substrate-binding residues include threonine 167, lysine 190, threonine 201, glutamate 281, asparagine 400, and serine 405. Threonine 201 functions as the Nucleophile in the catalytic mechanism.

The protein belongs to the ArgJ family. In terms of assembly, heterotetramer of two alpha and two beta chains.

The protein localises to the cytoplasm. The enzyme catalyses N(2)-acetyl-L-ornithine + L-glutamate = N-acetyl-L-glutamate + L-ornithine. It catalyses the reaction L-glutamate + acetyl-CoA = N-acetyl-L-glutamate + CoA + H(+). It functions in the pathway amino-acid biosynthesis; L-arginine biosynthesis; L-ornithine and N-acetyl-L-glutamate from L-glutamate and N(2)-acetyl-L-ornithine (cyclic): step 1/1. The protein operates within amino-acid biosynthesis; L-arginine biosynthesis; N(2)-acetyl-L-ornithine from L-glutamate: step 1/4. Catalyzes two activities which are involved in the cyclic version of arginine biosynthesis: the synthesis of N-acetylglutamate from glutamate and acetyl-CoA as the acetyl donor, and of ornithine by transacetylation between N(2)-acetylornithine and glutamate. The chain is Arginine biosynthesis bifunctional protein ArgJ from Nocardia farcinica (strain IFM 10152).